The sequence spans 520 residues: GMP synthase [glutamine-hydrolyzing] (520 aa).

Positions 9 to 202 constitute a Glutamine amidotransferase type-1 domain; that stretch reads KILILDFGSQ…VRAICGCTGH (194 aa). The active-site Nucleophile is the Cys86. Residues His176 and Glu178 contribute to the active site. A GMPS ATP-PPase domain is found at 203 to 395; that stretch reads WTPGQIIEDA…LGLPHQMVWR (193 aa). Residue 230 to 236 participates in ATP binding; the sequence is SGGVDSS.

In terms of assembly, homodimer.

The catalysed reaction is XMP + L-glutamine + ATP + H2O = GMP + L-glutamate + AMP + diphosphate + 2 H(+). It functions in the pathway purine metabolism; GMP biosynthesis; GMP from XMP (L-Gln route): step 1/1. In terms of biological role, catalyzes the synthesis of GMP from XMP. The chain is GMP synthase [glutamine-hydrolyzing] from Pelobacter propionicus (strain DSM 2379 / NBRC 103807 / OttBd1).